The primary structure comprises 680 residues: DNA-directed RNA polymerase subunit beta' (680 aa).

Residues Cys-69, Cys-71, Cys-87, and Cys-90 each coordinate Zn(2+). Mg(2+) contacts are provided by Asp-489, Asp-491, and Asp-493.

It belongs to the RNA polymerase beta' chain family. RpoC1 subfamily. In terms of assembly, in plastids the minimal PEP RNA polymerase catalytic core is composed of four subunits: alpha, beta, beta', and beta''. When a (nuclear-encoded) sigma factor is associated with the core the holoenzyme is formed, which can initiate transcription. The cofactor is Mg(2+). Zn(2+) serves as cofactor.

The protein resides in the plastid. It is found in the chloroplast. It catalyses the reaction RNA(n) + a ribonucleoside 5'-triphosphate = RNA(n+1) + diphosphate. In terms of biological role, DNA-dependent RNA polymerase catalyzes the transcription of DNA into RNA using the four ribonucleoside triphosphates as substrates. This is DNA-directed RNA polymerase subunit beta' from Manihot esculenta (Cassava).